A 519-amino-acid polypeptide reads, in one-letter code: Glutamate--cysteine ligase (519 aa).

This sequence belongs to the glutamate--cysteine ligase type 1 family. Type 1 subfamily.

It catalyses the reaction L-cysteine + L-glutamate + ATP = gamma-L-glutamyl-L-cysteine + ADP + phosphate + H(+). The protein operates within sulfur metabolism; glutathione biosynthesis; glutathione from L-cysteine and L-glutamate: step 1/2. This is Glutamate--cysteine ligase from Erwinia tasmaniensis (strain DSM 17950 / CFBP 7177 / CIP 109463 / NCPPB 4357 / Et1/99).